The primary structure comprises 514 residues: Cytochrome bd-II ubiquinol oxidase subunit 1 (514 aa).

Residues 1–22 lie on the Cytoplasmic side of the membrane; that stretch reads MWDVIDLSRWQFALTALYHFLF. Position 19 (H19) interacts with heme. A helical membrane pass occupies residues 23–42; the sequence is VPLTLGLIFLLAIMETIYVV. The Periplasmic segment spans residues 43-94; sequence TGKTIYRDMTRFWGKLFGINFALGVATGLTMEFQFGTNWSFYSNYVGDIFGA. A helical transmembrane segment spans residues 95–114; it reads PLAMEALMAFFLESTFVGLF. The Cytoplasmic segment spans residues 115 to 129; it reads FFGWQRLNKYQHLLV. The chain crosses the membrane as a helical span at residues 130-149; it reads TWLVAFGSNLSALWILNANG. Residues 150-187 are Periplasmic-facing; that stretch reads WMQYPTGAHFDIDTLRMEMTSFSELVFNPVSQVKFVHT. H186 lines the heme pocket. Residues 188–207 traverse the membrane as a helical segment; the sequence is VMAGYVTGAMFIMAISAWYL. Over 208 to 219 the chain is Cytoplasmic; it reads LRGRERNVALRS. Residues 220-239 traverse the membrane as a helical segment; it reads FAIGSVFGTLAIIGTLQLGD. Residues 240-392 are Periplasmic-facing; sequence SSAYEVAQVQ…VAPVFWSFRI (153 aa). M393 is a binding site for heme. The helical transmembrane segment at 393 to 412 threads the bilayer; the sequence is MVGCGSLLLLVMLIALVQTL. Topologically, residues 413–470 are cytoplasmic; sequence RGKIDQHRWVLKMALWSLPLPWIAIEAGWFMTEFGRQPWAIQDILPTYSAHSALTTGQ. Residues 471–490 form a helical membrane-spanning segment; that stretch reads LAFSLIMIVGLYTLFLIAEV. The Periplasmic portion of the chain corresponds to 491–514; it reads YLMQKYARLGPSAMQSEQPTQQQG.

This sequence belongs to the cytochrome ubiquinol oxidase subunit 1 family. In terms of assembly, heterodimer of subunits I and II. Heme serves as cofactor. Post-translationally, the N-terminus is blocked.

Its subcellular location is the cell inner membrane. The enzyme catalyses 2 a ubiquinol + O2 + n H(+)(in) = 2 a ubiquinone + 2 H2O + n H(+)(out). It functions in the pathway energy metabolism; oxidative phosphorylation. Inhibited by cyanide; is more sensitive to cyanide than cytochrome bd-I oxidase. Its function is as follows. A terminal oxidase that catalyzes quinol-dependent, Na(+)-independent oxygen uptake. Prefers menadiol over other quinols although ubiquinol was not tested. Generates a proton motive force using protons and electrons from opposite sides of the membrane to generate H(2)O, transferring 1 proton/electron. The polypeptide is Cytochrome bd-II ubiquinol oxidase subunit 1 (appC) (Escherichia coli (strain K12)).